The following is a 519-amino-acid chain: Cytochrome P450 monooxygenase FPY7 (519 aa).

Residues 12–34 (SLSLRWKIIVTLLAIYTLRIIGT) traverse the membrane as a helical segment. Cysteine 465 contacts heme.

Belongs to the cytochrome P450 family. Requires heme as cofactor.

It is found in the membrane. It participates in secondary metabolite biosynthesis. Its function is as follows. Cytochrome P450 monooxygenase; part of the gene cluster that mediates the biosynthesis of the gamma-pyrones fusapyrone (FPY) and deoxyfusapyrone (dFPY). FPY is an undecaketide and thus likely synthesized by the polyketide synthase FPY1 from acetyl-CoA functioning as starter unit and the addition of 10 malonyl-CoA extender units by successive Claisen-condensations. Next to this, FPY shares some rare features: C-glycosylated 4-deoxyglucose at C-3, a gem-dimethyl group at C-13, and an alpha-beta to beta-gamma double bond shift at C-20. During FPY biosynthesis mono-C-methyl groups are transferred to the tetra-, penta-, hexa- and heptaketide, while two C-methyl groups are transferred to the nonaketide, suggesting that the CMet domain is programmed to selectively catalyze two successive C-alpha-methylation reactions of the nonaketide, while other alpha-carbons are non- or mono-methylated only. While the origin of the 4'-deoxyglucose moiety remains opaque, its transfer to C-3 is most likely mediated by the C-glycosyltransferase FPY2. Next to this, the hydroxyl group present at C-33 and discriminating between FPY and dFPY, is likely to be installed by the cytochrome P450 monooxygenase FPY7. No putative function can be predicted for the remaining genes FPY3-FPY6. This is Cytochrome P450 monooxygenase FPY7 from Fusarium mangiferae (Mango malformation disease fungus).